Consider the following 122-residue polypeptide: Large ribosomal subunit protein uL14 (122 aa).

It belongs to the universal ribosomal protein uL14 family. Part of the 50S ribosomal subunit. Forms a cluster with proteins L3 and L19. In the 70S ribosome, L14 and L19 interact and together make contacts with the 16S rRNA in bridges B5 and B8.

Its function is as follows. Binds to 23S rRNA. Forms part of two intersubunit bridges in the 70S ribosome. In Rippkaea orientalis (strain PCC 8801 / RF-1) (Cyanothece sp. (strain PCC 8801)), this protein is Large ribosomal subunit protein uL14.